The sequence spans 586 residues: YTH domain-containing family protein 2 (586 aa).

Disordered regions lie at residues 98–128, 141–181, and 301–464; these read LKEKVKQSRALRQSVNNAAEQQPSTKPQPVQ, SQDQ…KESP, and QGLA…PLVS. 3 stretches are compositionally biased toward polar residues: residues 107-128, 169-181, and 352-368; these read ALRQSVNNAAEQQPSTKPQPVQ, TLPTTPRTIKESP, and SSQAALSCKSKQSTDIQ. Residues 398 to 418 are compositionally biased toward basic residues; the sequence is CARRHRSSSPRGRSGSHKSRR. Polar residues predominate over residues 421-436; it reads TDSPVSRSTTKSTPSR. One can recognise a YTH domain in the interval 435 to 576; sequence SRARQPGHRD…YCGRDLLRLM (142 aa). A compositionally biased stretch (basic and acidic residues) spans 441–458; sequence GHRDYREYRDDRNRDTKP.

Belongs to the YTHDF family. YTHDF1 subfamily.

Specifically recognizes and binds N6-methyladenosine (m6A)-containing mRNAs, and regulates their stability. M6A is a modification present at internal sites of mRNAs and some non-coding RNAs and plays a role in mRNA stability and processing. Plays a role in pathogenicity towards plant host. The chain is YTH domain-containing family protein 2 from Pyricularia oryzae (strain 70-15 / ATCC MYA-4617 / FGSC 8958) (Rice blast fungus).